The primary structure comprises 221 residues: Chaperone protein TorD (221 aa).

The protein belongs to the TorD/DmsD family. TorD subfamily.

It localises to the cytoplasm. Functionally, involved in the biogenesis of TorA. Acts on TorA before the insertion of the molybdenum cofactor and, as a result, probably favors a conformation of the apoenzyme that is competent for acquiring the cofactor. In Psychrobacter sp. (strain PRwf-1), this protein is Chaperone protein TorD.